Here is a 902-residue protein sequence, read N- to C-terminus: HTH-type transcriptional regulator MalT (902 aa).

39–46 lines the ATP pocket; it reads SPAGYGKT. Positions 832-897 constitute an HTH luxR-type domain; sequence ELVRTSPLTQ…EAVQTAEQLL (66 aa). Residues 856-875 constitute a DNA-binding region (H-T-H motif); sequence NEQIAHELDVAGTTIKTHIR.

This sequence belongs to the MalT family. As to quaternary structure, monomer in solution. Oligomerizes to an active state in the presence of the positive effectors ATP and maltotriose.

Its activity is regulated as follows. Activated by ATP and maltotriose, which are both required for DNA binding. In terms of biological role, positively regulates the transcription of the maltose regulon whose gene products are responsible for uptake and catabolism of malto-oligosaccharides. Specifically binds to the promoter region of its target genes, recognizing a short DNA motif called the MalT box. The chain is HTH-type transcriptional regulator MalT from Vibrio cholerae serotype O1 (strain ATCC 39315 / El Tor Inaba N16961).